The sequence spans 1149 residues: DNA-directed RNA polymerase III subunit RPC2 (1149 aa).

4 residues coordinate Zn(2+): cysteine 1095, cysteine 1098, cysteine 1107, and cysteine 1110. The C4-type zinc finger occupies 1095-1110; sequence CDKCGLMGYSGWCTTC.

The protein belongs to the RNA polymerase beta chain family. Component of the RNA polymerase III (Pol III) complex consisting of 17 subunits.

The protein resides in the nucleus. The enzyme catalyses RNA(n) + a ribonucleoside 5'-triphosphate = RNA(n+1) + diphosphate. DNA-dependent RNA polymerase catalyzes the transcription of DNA into RNA using the four ribonucleoside triphosphates as substrates. Second largest core component of RNA polymerase III which synthesizes small RNAs, such as 5S rRNA and tRNAs. Proposed to contribute to the polymerase catalytic activity and forms the polymerase active center together with the largest subunit. Pol III is composed of mobile elements and RPC2 is part of the core element with the central large cleft and probably a clamp element that moves to open and close the cleft. This chain is DNA-directed RNA polymerase III subunit RPC2 (RET1), found in Saccharomyces cerevisiae (strain ATCC 204508 / S288c) (Baker's yeast).